The sequence spans 329 residues: MTSNSFPVFDGVSNKYDNNTFYGRYQNFRDITDPSTLFATEKDLSQSKTLLDNFKKGLVDPVKHSDELWKAKKILDSTIHPDTGKPIFLPFRVSAFLPINVIICAGLILPNASIGTTIFWQWINQSYNIALNHANRNASNTMSNKQILEAYASAVGISCSLAVGLGWGVNKLNIQNKTISSALRMMVPFTAVTSAGIANVLIMRGNEMVNGIDIKDKDGVIHGKSKEAGKSAVYKVAFSRAATSFPALLLPPIVMGLFERTSFVKKYPKVRMPLNLAVIAAIFNTSLPAAIALFPQESTISADSLEPQFRNIKDKNGNIIKEFIYNKGL.

5 helical membrane-spanning segments follow: residues 95 to 115 (AFLP…ASIG), 147 to 167 (ILEA…GLGW), 183 to 203 (LRMM…VLIM), 238 to 258 (FSRA…MGLF), and 274 to 294 (LNLA…IALF).

The protein belongs to the sideroflexin family.

The protein localises to the mitochondrion membrane. Its function is as follows. Mitochondrial amino-acid transporter that mediates transport of serine into mitochondria. The chain is Sideroflexin from Dictyostelium discoideum (Social amoeba).